A 199-amino-acid polypeptide reads, in one-letter code: N-(5'-phosphoribosyl)anthranilate isomerase (199 aa).

It belongs to the TrpF family.

The enzyme catalyses N-(5-phospho-beta-D-ribosyl)anthranilate = 1-(2-carboxyphenylamino)-1-deoxy-D-ribulose 5-phosphate. It participates in amino-acid biosynthesis; L-tryptophan biosynthesis; L-tryptophan from chorismate: step 3/5. This is N-(5'-phosphoribosyl)anthranilate isomerase from Campylobacter jejuni subsp. jejuni serotype O:6 (strain 81116 / NCTC 11828).